The primary structure comprises 356 residues: Probable arabinogalactan endo-beta-1,4-galactanase A (356 aa).

The signal sequence occupies residues 1-21 (MLGKTVLLPLLVLLCHSLASA). N-linked (GlcNAc...) asparagine glycosylation occurs at Asn-133. Residue Glu-157 is the Proton donor of the active site. Glu-268 functions as the Nucleophile in the catalytic mechanism.

Belongs to the glycosyl hydrolase 53 family.

Its subcellular location is the secreted. It catalyses the reaction The enzyme specifically hydrolyzes (1-&gt;4)-beta-D-galactosidic linkages in type I arabinogalactans.. Functionally, endogalactanase involved in the degradation of plant cell wall polysaccharides, and more particularly of hairy regions of pectin. This is Probable arabinogalactan endo-beta-1,4-galactanase A (galA) from Aspergillus fumigatus (strain ATCC MYA-4609 / CBS 101355 / FGSC A1100 / Af293) (Neosartorya fumigata).